Reading from the N-terminus, the 395-residue chain is MATVDRWLLPDGIEEVLPPEAARIEVARRQVLDLFQSWGYEFVVTPHIEYLESLLTGAGSDLDLRTFKVIDPQSGRQMGFRADITPQVARIDAHTLKREGPSRLCYAGSVLHAQPRALSSSRSPIQLGAELYGDASPSSDVEVISLMLAMLQLADVPDVHMDLGHVGIYRGLARAAGLSGEVEQQLFDALQRKAIDEVVALTANLPPELASMLRALVDLCGGREVLDAARDRLAGAPAPVLEALDDLLAIADRLAARFPQLPLYFDLGELRGYHYHTGVVFAVFVPGVGQSIAQGGRYDDIGADFGRARPATGFSTDLKTLVTLGQAEIVLPSGGIWMPDSTDAALWQQVCQLRSEGQRVVQALPGQQVSAAREADCDRQLIQHGEHWQVMPLAS.

The protein belongs to the class-II aminoacyl-tRNA synthetase family. HisZ subfamily. Heteromultimer composed of HisG and HisZ subunits.

The protein localises to the cytoplasm. It functions in the pathway amino-acid biosynthesis; L-histidine biosynthesis; L-histidine from 5-phospho-alpha-D-ribose 1-diphosphate: step 1/9. In terms of biological role, required for the first step of histidine biosynthesis. May allow the feedback regulation of ATP phosphoribosyltransferase activity by histidine. The chain is ATP phosphoribosyltransferase regulatory subunit from Pseudomonas syringae pv. tomato (strain ATCC BAA-871 / DC3000).